The following is a 456-amino-acid chain: Aromatic amino acid transport protein AroP (456 aa).

Over 1-18 (MEGQQHGEQLKRGLKNRH) the chain is Cytoplasmic. The helical transmembrane segment at 19–39 (IQLIALGGAIGTGLFLGSASV) threads the bilayer. The Periplasmic segment spans residues 40–41 (IQ). A helical transmembrane segment spans residues 42–62 (SAGPGIILGYAIAGFIAFLIM). At 63 to 85 (RQLGEMVVEEPVAGSFSHFAYKY) the chain is on the cytoplasmic side. A helical transmembrane segment spans residues 86–106 (WGSFAGFASGWNYWVLYVLVA). Topologically, residues 107 to 116 (MAELTAVGKY) are periplasmic. A helical membrane pass occupies residues 117–137 (IQFWYPEIPTWVSAAVFFVVI). Over 138 to 154 (NAINLTNVKVFGEMEFW) the chain is Cytoplasmic. The helical transmembrane segment at 155–175 (FAIIKVIAVVAMIIFGAWLLF) threads the bilayer. Over 176–200 (SGNGGPQASVSNLWDQGGFLPHGFT) the chain is Periplasmic. A helical transmembrane segment spans residues 201–221 (GLVMMMAIIMFSFGGLELVGI). Topologically, residues 222–239 (TAAEADNPEQSIPKATNQ) are cytoplasmic. The helical transmembrane segment at 240-260 (VIYRILIFYIGSLAVLLSLMP) threads the bilayer. The Periplasmic segment spans residues 261–270 (WTRVTADTSP). The helical transmembrane segment at 271-291 (FVLIFHELGDTFVANALNIVV) threads the bilayer. Over 292 to 332 (LTAALSVYNSCVYCNSRMLFGLAQQGNAPKALASVDKRGVP) the chain is Cytoplasmic. The helical transmembrane segment at 333–353 (VNTILVSALVTALCVLINYLA) threads the bilayer. Over 354 to 357 (PESA) the chain is Periplasmic. A helical membrane pass occupies residues 358–378 (FGLLMALVVSALVINWAMISL). Over 379 to 398 (AHMKFRRAKQEQGVVTRFPA) the chain is Cytoplasmic. The helical transmembrane segment at 399–419 (LLYPLGNWICLLFMAAVLVIM) threads the bilayer. At 420 to 424 (LMTPG) the chain is on the periplasmic side. The chain crosses the membrane as a helical span at residues 425 to 445 (MAISVYLIPVWLIVLGIGYLF). The Cytoplasmic segment spans residues 446–456 (KEKTAKAVKAH).

Belongs to the amino acid-polyamine-organocation (APC) superfamily. Amino acid transporter (AAT) (TC 2.A.3.1) family.

It localises to the cell inner membrane. The enzyme catalyses L-phenylalanine(in) + H(+)(in) = L-phenylalanine(out) + H(+)(out). It catalyses the reaction L-tryptophan(in) + H(+)(in) = L-tryptophan(out) + H(+)(out). The catalysed reaction is L-tyrosine(in) + H(+)(in) = L-tyrosine(out) + H(+)(out). Its function is as follows. Permease that is involved in the active transport across the cytoplasmic membrane of all three aromatic amino acids, phenylalanine, tyrosine and tryptophan. The chain is Aromatic amino acid transport protein AroP (aroP) from Escherichia coli O6:H1 (strain CFT073 / ATCC 700928 / UPEC).